Consider the following 615-residue polypeptide: Chaperone protein DnaK (615 aa).

The residue at position 177 (T177) is a Phosphothreonine; by autocatalysis. The interval 567–615 is disordered; sequence TKESQGIAMKAYQKAQEKQAQEKGTQENTTAKNEKPQDEVVDADFEEKK. Basic and acidic residues predominate over residues 581–591; it reads AQEKQAQEKGT. Over residues 605–615 the composition is skewed to acidic residues; it reads EVVDADFEEKK.

Belongs to the heat shock protein 70 family.

Functionally, acts as a chaperone. The chain is Chaperone protein DnaK from Onion yellows phytoplasma (strain OY-M).